Consider the following 498-residue polypeptide: ATP synthase subunit beta, chloroplastic (498 aa).

172-179 (GGAGVGKT) contacts ATP.

It belongs to the ATPase alpha/beta chains family. As to quaternary structure, F-type ATPases have 2 components, CF(1) - the catalytic core - and CF(0) - the membrane proton channel. CF(1) has five subunits: alpha(3), beta(3), gamma(1), delta(1), epsilon(1). CF(0) has four main subunits: a(1), b(1), b'(1) and c(9-12).

Its subcellular location is the plastid. The protein localises to the chloroplast thylakoid membrane. The catalysed reaction is ATP + H2O + 4 H(+)(in) = ADP + phosphate + 5 H(+)(out). Its function is as follows. Produces ATP from ADP in the presence of a proton gradient across the membrane. The catalytic sites are hosted primarily by the beta subunits. The polypeptide is ATP synthase subunit beta, chloroplastic (Nypa fruticans (Nypa palm)).